A 349-amino-acid polypeptide reads, in one-letter code: MELLSEYGLFLAKIVTVVLAIAAIAAIIVNVAQRNKRQRGELRVNNLSEQYKEMKEELAAALMDSHQQKQWHKAQKKKHKQEAKAAKAKAKLGEVATDSKPRVWVLDFKGSMDAHEVNSLREEITAVLAAFKPQDQVVLRLESPGGMVHGYGLAASQLQRLRDKNIPLTVTVDKVAASGGYMMACVADKIVSAPFAIVGSIGVVAQMPNFNRFLKSKDIDIELHTAGQYKRTLTLLGENTEEGREKFREELNETHQLFKDFVKRMRPSLDIEQVATGEHWYGQQAVEKGLVDEINTSDEVILSLMEGREVVNVRYMQRKRLIDRFTGSAAESADRLLLRWWQRGQKPLM.

At 1–8 the chain is on the periplasmic side; it reads MELLSEYG. Residues 9–29 traverse the membrane as a helical segment; it reads LFLAKIVTVVLAIAAIAAIIV. Residues 30-349 lie on the Cytoplasmic side of the membrane; sequence NVAQRNKRQR…WWQRGQKPLM (320 aa). The active-site Nucleophile is Ser-178. The active-site Proton donor/acceptor is the Lys-230.

This sequence belongs to the peptidase S49 family.

It is found in the cell inner membrane. Multicopy suppressor of the HtrA (DegP) null phenotype. It is possibly a protease, not essential for bacterial viability. This chain is Probable protease SohB (sohB), found in Escherichia coli (strain K12).